We begin with the raw amino-acid sequence, 130 residues long: Small ribosomal subunit protein uS9 (130 aa).

The protein belongs to the universal ribosomal protein uS9 family.

The chain is Small ribosomal subunit protein uS9 from Streptococcus suis (strain 98HAH33).